A 354-amino-acid chain; its full sequence is Ornithine carbamoyltransferase, catabolic (354 aa).

Carbamoyl phosphate-binding positions include 67 to 70 (STRT), glutamine 94, arginine 118, and 145 to 148 (HPTQ). L-ornithine-binding positions include asparagine 177, aspartate 241, and 245 to 246 (SM). Carbamoyl phosphate is bound by residues 284-285 (CL) and arginine 329.

The protein belongs to the aspartate/ornithine carbamoyltransferase superfamily. OTCase family.

It is found in the cytoplasm. The catalysed reaction is carbamoyl phosphate + L-ornithine = L-citrulline + phosphate + H(+). It functions in the pathway amino-acid degradation; L-arginine degradation via ADI pathway; carbamoyl phosphate from L-arginine: step 2/2. Its function is as follows. Reversibly catalyzes the transfer of the carbamoyl group from carbamoyl phosphate (CP) to the N(epsilon) atom of ornithine (ORN) to produce L-citrulline. This is Ornithine carbamoyltransferase, catabolic (arcB) from Lactococcus lactis subsp. lactis (strain IL1403) (Streptococcus lactis).